The sequence spans 345 residues: Probable aldo-keto reductase 4 (345 aa).

Residue tyrosine 63 is the Proton donor of the active site. Histidine 130 is a substrate binding site. 209 to 219 (SPLGRGFFASG) contributes to the NADP(+) binding site.

This sequence belongs to the aldo/keto reductase family.

The protein is Probable aldo-keto reductase 4 of Arabidopsis thaliana (Mouse-ear cress).